Reading from the N-terminus, the 645-residue chain is Conserved oligomeric Golgi complex subunit 6 (645 aa).

Belongs to the COG6 family.

The protein resides in the golgi apparatus membrane. Acts as a component of the peripheral membrane COG complex that is involved in intra-Golgi protein trafficking. COG is located at the cis-Golgi, and regulates tethering of retrograde intra-Golgi vesicles and possibly a number of other membrane trafficking events. This chain is Conserved oligomeric Golgi complex subunit 6 (COG6), found in Ajellomyces capsulatus (strain NAm1 / WU24) (Darling's disease fungus).